We begin with the raw amino-acid sequence, 373 residues long: Alpha-N-acetylgalactosaminide alpha-2,6-sialyltransferase 2 (373 aa).

Topologically, residues Met1–Arg6 are cytoplasmic. The helical; Signal-anchor for type II membrane protein transmembrane segment at Trp7–Ser27 threads the bilayer. Over Ser28–Arg373 the chain is Lumenal. Disulfide bonds link Cys65-Cys147 and Cys150-Cys316. An N-linked (GlcNAc...) asparagine glycan is attached at Asn103. Asn155 is a CMP-N-acetyl-beta-neuraminate binding site. Residue Asn160 is glycosylated (N-linked (GlcNAc...) asparagine). 3 residues coordinate CMP-N-acetyl-beta-neuraminate: Asn178, Ser303, and His335.

This sequence belongs to the glycosyltransferase 29 family. As to expression, highly expressed in lactating mammary gland and adult testis. Lower levels in kidney.

Its subcellular location is the golgi apparatus membrane. The catalysed reaction is a beta-D-galactosyl-(1-&gt;3)-N-acetyl-alpha-D-galactosaminyl derivative + CMP-N-acetyl-beta-neuraminate = a beta-D-galactosyl-(1-&gt;3)-[N-acetyl-alpha-neuraminyl-(2-&gt;6)]-N-acetyl-alpha-D-galactosaminyl derivative + CMP + H(+). The enzyme catalyses a 3-O-[N-acetyl-alpha-D-galactosaminyl]-L-threonyl-[protein] + CMP-N-acetyl-beta-neuraminate = a 3-O-[N-acetyl-alpha-neuraminosyl-(2-&gt;6)-N-acetyl-alpha-D-galactosaminyl]-L-threonyl-[protein] + CMP + H(+). It catalyses the reaction a 3-O-[N-acetyl-alpha-neuraminyl-(2-&gt;3)-beta-D-galactosyl-(1-&gt;3)-N-acetyl-alpha-D-galactosaminyl]-L-threonyl-[protein] + CMP-N-acetyl-beta-neuraminate = a 3-O-{alpha-Neu5Ac-(2-&gt;3)-beta-D-Gal-(1-&gt;3)-[alpha-Neu5Ac-(2-&gt;6)]-alpha-D-GalNAc}-L-threonyl-[protein] + CMP + H(+). It participates in protein modification; protein glycosylation. Its function is as follows. Catalyzes the transfer of N-acetylneuraminyl groups onto glycan chains in glycoproteins. Conjugates sialic acid with an alpha-2-6 linkage to N-acetylgalactosamine (GalNAc) glycan chains linked to serine or threonine in glycoproteins. Sialylates alphaGalNAc- and Galbeta1-&gt;3GalNAc-O-Ser/Thr epitopes also known as Tn and T antigens. The chain is Alpha-N-acetylgalactosaminide alpha-2,6-sialyltransferase 2 (St6galnac2) from Mus musculus (Mouse).